We begin with the raw amino-acid sequence, 342 residues long: Probable deoxyhypusine synthase (342 aa).

The active-site Nucleophile is the Lys307.

Belongs to the deoxyhypusine synthase family. Requires NAD(+) as cofactor.

The enzyme catalyses [eIF5A protein]-L-lysine + spermidine = [eIF5A protein]-deoxyhypusine + propane-1,3-diamine. Its pathway is protein modification; eIF5A hypusination. Its function is as follows. Catalyzes the NAD-dependent oxidative cleavage of spermidine and the subsequent transfer of the butylamine moiety of spermidine to the epsilon-amino group of a specific lysine residue of the eIF-5A precursor protein to form the intermediate deoxyhypusine residue. The sequence is that of Probable deoxyhypusine synthase (dys) from Pyrococcus horikoshii (strain ATCC 700860 / DSM 12428 / JCM 9974 / NBRC 100139 / OT-3).